The following is a 508-amino-acid chain: Cytochrome P450 monooxygenase dmxR5 (508 aa).

A helical transmembrane segment spans residues 24–44 (LTLGLGAILVVLMSFLAFLSY). N-linked (GlcNAc...) asparagine glycosylation is found at asparagine 387 and asparagine 405. Cysteine 451 serves as a coordination point for heme. A glycan (N-linked (GlcNAc...) asparagine) is linked at asparagine 462. Residues 481–508 (EHKKSTQESGHGVPLPSKLSKFSPREEN) are disordered.

Belongs to the cytochrome P450 family. Heme serves as cofactor.

The protein resides in the membrane. It functions in the pathway secondary metabolite biosynthesis. Functionally, cytochrome P450 monooxygenase; part of the gene cluster that mediates the biosynthesis of the dimeric xanthones cryptosporioptides. The pathway begins with the synthesis of atrochrysone thioester by the polyketide synthase dmx-nrPKS. The atrochrysone carboxyl ACP thioesterase dmxR1 then breaks the thioester bond and releases the atrochrysone carboxylic acid from dmx-nrPKS. Atrochrysone carboxylic acid is decarboxylated by the decarboxylase dmxR15, and oxidized by the anthrone oxygenase dmxR16 to yield emodin. Emodin is then reduced to emodin hydroquinone by the oxidoreductase dmxR7. A-ring reduction by the short chain dehydrogenase dmxR18, dehydration by the scytalone dehydratase-like protein dmxR17 and probable spontaneous re-oxidation, results in overall deoxygenation to chrysophanol. Baeyer-Villiger oxidation by the Baeyer-Villiger monooxygenase (BVMO) dmxR6 then yields monodictylactone in equilibrium with monodictyphenone. In the case of the cryptosporioptides biosynthesis, monodictylactone is reduced at C-12 to an alcohol (by the short chain dehydrogenases dmxR12 or dmxR8) and hydroxylated at C-5 by dmxR9, yielding the electron-rich aromatic which could eliminate H(2)O to form the ortho-quinonemethide, followed by tautomerisation to paraquinone and complete the formal reduction to produce the 10-methylgroup. Conjugate addition of C-4a-OH to the resulting paraquinone by the monooxygenase dmxR10 then gives cyclohexadienone, which is then reduced at C-5 by the short chain dehydrogenase dmxR3 to give the dihydroxanthone. The 6,7-epoxide in the cryptosporioptides could be introduced by the cytochrome P450 monooxygenase dmxL3. The highly reducing PKS dmxL2 manufactures butyrate, which is further carboxylated by dmxL1 to form ethylmalonate. It is not yet clear whether the carboxylation occurs while the butyrate is attached to the ACP of dmxL2, but this unusual fungal metabolite could then be esterified to O-5 by the O-acetyltransferase dmxR13. Finally, dimerization performed by dmxR5 gives the observed dimers cryptosporioptides A, B and C as the final products of the pathway. This is Cytochrome P450 monooxygenase dmxR5 from Cryptosporiopsis sp. (strain 8999).